A 191-amino-acid chain; its full sequence is Small ribosomal subunit protein uS9c (191 aa).

The disordered stretch occupies residues 166 to 191 (TQDSRVKERRKYGLKKARKASQYHKR). A compositionally biased stretch (basic residues) spans 172-191 (KERRKYGLKKARKASQYHKR).

This sequence belongs to the universal ribosomal protein uS9 family.

It is found in the plastid. It localises to the chloroplast. The chain is Small ribosomal subunit protein uS9c (rps9) from Chlamydomonas reinhardtii (Chlamydomonas smithii).